We begin with the raw amino-acid sequence, 465 residues long: Myosin-6 (465 aa).

The Myosin motor domain maps to 1-35; the sequence is ILERGDALLVVQWNIRAFTGVKKWPWMELYFEIEP. Residues 36–465 adopt a coiled-coil conformation; that stretch reads LLKSAEAEKE…YRRKLEEAQR (430 aa). Residues S285 and S334 each carry the phosphoserine modification. Y456 bears the Phosphotyrosine mark.

In terms of assembly, muscle myosin is a hexameric protein that consists of 2 heavy chain subunits (MHC), 2 alkali light chain subunits (MLC) and 2 regulatory light chain subunits (MLC-2).

It localises to the cytoplasm. The protein resides in the myofibril. In terms of biological role, muscle contraction. The protein is Myosin-6 (MYH6) of Oryctolagus cuniculus (Rabbit).